Reading from the N-terminus, the 432-residue chain is Glutamate-1-semialdehyde 2,1-aminomutase (432 aa).

K265 is subject to N6-(pyridoxal phosphate)lysine.

This sequence belongs to the class-III pyridoxal-phosphate-dependent aminotransferase family. HemL subfamily. Homodimer. Requires pyridoxal 5'-phosphate as cofactor.

The protein localises to the cytoplasm. The enzyme catalyses (S)-4-amino-5-oxopentanoate = 5-aminolevulinate. It functions in the pathway porphyrin-containing compound metabolism; protoporphyrin-IX biosynthesis; 5-aminolevulinate from L-glutamyl-tRNA(Glu): step 2/2. The sequence is that of Glutamate-1-semialdehyde 2,1-aminomutase from Histophilus somni (strain 2336) (Haemophilus somnus).